The following is a 503-amino-acid chain: Probable cytosol aminopeptidase (503 aa).

Residues Lys274 and Asp279 each contribute to the Mn(2+) site. The active site involves Lys286. Mn(2+) contacts are provided by Asp297, Asp356, and Glu358. Arg360 is an active-site residue.

This sequence belongs to the peptidase M17 family. Mn(2+) is required as a cofactor.

The protein resides in the cytoplasm. The enzyme catalyses Release of an N-terminal amino acid, Xaa-|-Yaa-, in which Xaa is preferably Leu, but may be other amino acids including Pro although not Arg or Lys, and Yaa may be Pro. Amino acid amides and methyl esters are also readily hydrolyzed, but rates on arylamides are exceedingly low.. It carries out the reaction Release of an N-terminal amino acid, preferentially leucine, but not glutamic or aspartic acids.. Its function is as follows. Presumably involved in the processing and regular turnover of intracellular proteins. Catalyzes the removal of unsubstituted N-terminal amino acids from various peptides. The polypeptide is Probable cytosol aminopeptidase (Burkholderia cenocepacia (strain ATCC BAA-245 / DSM 16553 / LMG 16656 / NCTC 13227 / J2315 / CF5610) (Burkholderia cepacia (strain J2315))).